We begin with the raw amino-acid sequence, 205 residues long: Isochorismatase domain-containing protein 2 (205 aa).

Residues Ser7 and Ser202 each carry the phosphoserine modification.

The protein belongs to the isochorismatase family. In terms of assembly, interacts with CDKN2A.

Its subcellular location is the cytoplasm. It is found in the nucleus. This chain is Isochorismatase domain-containing protein 2 (ISOC2), found in Homo sapiens (Human).